The chain runs to 215 residues: tRNA (guanine-N(7)-)-methyltransferase (215 aa).

S-adenosyl-L-methionine contacts are provided by Glu-43, Glu-68, Asp-95, and Asp-117. Asp-117 is a catalytic residue. Residues Lys-121, Asp-153, and 190–193 each bind substrate; that span reads TEYE.

The protein belongs to the class I-like SAM-binding methyltransferase superfamily. TrmB family.

It carries out the reaction guanosine(46) in tRNA + S-adenosyl-L-methionine = N(7)-methylguanosine(46) in tRNA + S-adenosyl-L-homocysteine. Its pathway is tRNA modification; N(7)-methylguanine-tRNA biosynthesis. Its function is as follows. Catalyzes the formation of N(7)-methylguanine at position 46 (m7G46) in tRNA. The sequence is that of tRNA (guanine-N(7)-)-methyltransferase from Staphylococcus epidermidis (strain ATCC 35984 / DSM 28319 / BCRC 17069 / CCUG 31568 / BM 3577 / RP62A).